We begin with the raw amino-acid sequence, 421 residues long: D-amino-acid oxidase (421 aa).

Positions 12, 13, 14, 15, 47, 64, 65, 225, 226, 359, 385, 388, and 389 each coordinate FAD. Residue arginine 359 participates in D-proline binding. A D-serine-binding site is contributed by arginine 359.

It belongs to the DAMOX/DASOX family. The cofactor is FAD.

The protein localises to the cytoplasm. Its subcellular location is the secreted. It is found in the cell wall. It catalyses the reaction a D-alpha-amino acid + O2 + H2O = a 2-oxocarboxylate + H2O2 + NH4(+). In terms of biological role, catalyzes the oxidative deamination of D-amino acids with broad substrate specificity. The chain is D-amino-acid oxidase from Bradyrhizobium diazoefficiens (strain JCM 10833 / BCRC 13528 / IAM 13628 / NBRC 14792 / USDA 110).